We begin with the raw amino-acid sequence, 466 residues long: Probable periplasmic serine protease do/HhoA-like (466 aa).

Positions 1–29 (MKKTRFVLNSIALGLSVLSTSFVAHVAQA) are cleaved as a signal peptide. Catalysis depends on charge relay system residues H120, D150, and S226. 2 consecutive PDZ domains span residues 270-361 (ILEF…LRDG) and 367-458 (KMKL…LRGD).

It belongs to the peptidase S1C family.

It localises to the periplasm. The sequence is that of Probable periplasmic serine protease do/HhoA-like from Haemophilus influenzae (strain ATCC 51907 / DSM 11121 / KW20 / Rd).